Here is a 108-residue protein sequence, read N- to C-terminus: UPF0060 membrane protein YnfA (108 aa).

At 1 to 5 (MLKTT) the chain is on the periplasmic side. The chain crosses the membrane as a helical span at residues 6–26 (LLFFVTALCEIIGCFLPWLWI). Residues 27–30 (KRGA) are Cytoplasmic-facing. The chain crosses the membrane as a helical span at residues 31-51 (SVWWLLPAAASLALFVWLLTL). At 52 to 60 (HPAASGRVY) the chain is on the periplasmic side. Residues 61 to 81 (AAYGGVYVCTALLWLRVVDGV) traverse the membrane as a helical segment. Residues 82 to 84 (RLT) are Cytoplasmic-facing. A helical membrane pass occupies residues 85–105 (VYDWSGALIALCGMLIIVVGW). Topologically, residues 106-108 (GRT) are periplasmic.

The protein belongs to the UPF0060 family.

It is found in the cell inner membrane. This Salmonella typhi protein is UPF0060 membrane protein YnfA.